The chain runs to 107 residues: Integration host factor subunit alpha (107 aa).

This sequence belongs to the bacterial histone-like protein family. In terms of assembly, heterodimer of an alpha and a beta chain.

In terms of biological role, this protein is one of the two subunits of integration host factor, a specific DNA-binding protein that functions in genetic recombination as well as in transcriptional and translational control. The sequence is that of Integration host factor subunit alpha from Mesorhizobium japonicum (strain LMG 29417 / CECT 9101 / MAFF 303099) (Mesorhizobium loti (strain MAFF 303099)).